The chain runs to 307 residues: MSWLEKILTKSNIVSSRKVSIPEGVWTKCTSCEQVLYHADLERNLEVCPKCDHHMRMKARRRLETFLDTDSQVELAADLEPKDMLKFRDSKKYKDRISAAQKSSGEKDALIVMKGTLLEQPIVACAFEFSFMGGSMGSVVGAKFVRAVNEALESNCALVCFSASGGARMQEALMSLMQMAKTSAALQRLSAKGLPFISVLTDPTMGGVSASLAMLGDINIGEPKALIGFAGQRVIEQTVREKLPEGFQRSEFLLEHGAIDMIVNRREMRQRIGGLVAKMTNHSSPLVVPIEQPKLEESAPEQTPEQE.

In terms of domain architecture, CoA carboxyltransferase N-terminal spans 25-294 (VWTKCTSCEQ…PLVVPIEQPK (270 aa)). Cysteine 29, cysteine 32, cysteine 48, and cysteine 51 together coordinate Zn(2+). The C4-type zinc finger occupies 29–51 (CTSCEQVLYHADLERNLEVCPKC).

This sequence belongs to the AccD/PCCB family. Acetyl-CoA carboxylase is a heterohexamer composed of biotin carboxyl carrier protein (AccB), biotin carboxylase (AccC) and two subunits each of ACCase subunit alpha (AccA) and ACCase subunit beta (AccD). Zn(2+) serves as cofactor.

It localises to the cytoplasm. It carries out the reaction N(6)-carboxybiotinyl-L-lysyl-[protein] + acetyl-CoA = N(6)-biotinyl-L-lysyl-[protein] + malonyl-CoA. The protein operates within lipid metabolism; malonyl-CoA biosynthesis; malonyl-CoA from acetyl-CoA: step 1/1. Component of the acetyl coenzyme A carboxylase (ACC) complex. Biotin carboxylase (BC) catalyzes the carboxylation of biotin on its carrier protein (BCCP) and then the CO(2) group is transferred by the transcarboxylase to acetyl-CoA to form malonyl-CoA. This is Acetyl-coenzyme A carboxylase carboxyl transferase subunit beta from Photobacterium profundum (strain SS9).